The following is an 822-amino-acid chain: Probable RING finger protein 207 homolog (822 aa).

The segment at 8-42 (CTICKNEFEEPILLSCQHTTCRKCSTGSPSCKSCS) adopts an RING-type zinc-finger fold. The segment at 68-115 (EEMEECANCEQISLPMFYCETCQQSLCLVCRNVTHQARMFSSHKIISS) adopts a B box-type 1; atypical zinc-finger fold. 4 residues coordinate Zn(2+): C73, C76, C97, and H102. The B box-type 2; degenerate zinc-finger motif lies at 122–164 (YSSSLCKDHNEPYILYCSDVRKLVCIQCFNGRPLEERHSFISI). Coiled-coil stretches lie at residues 526–558 (NSQNRILAIEKEEENRRLNQEAKKKEELAGQSA) and 738–769 (DKDEVIEKEEIEKETEKEKKKVIRRRVKKVSE).

This is Probable RING finger protein 207 homolog from Caenorhabditis elegans.